We begin with the raw amino-acid sequence, 359 residues long: Alanine racemase, biosynthetic (359 aa).

The active-site Proton acceptor; specific for D-alanine is the Lys34. Lys34 is subject to N6-(pyridoxal phosphate)lysine. Arg129 lines the substrate pocket. The active-site Proton acceptor; specific for L-alanine is the Tyr255. Residue Met303 coordinates substrate.

This sequence belongs to the alanine racemase family. The cofactor is pyridoxal 5'-phosphate.

The catalysed reaction is L-alanine = D-alanine. Its pathway is amino-acid biosynthesis; D-alanine biosynthesis; D-alanine from L-alanine: step 1/1. It participates in cell wall biogenesis; peptidoglycan biosynthesis. Its function is as follows. Catalyzes the interconversion of L-alanine and D-alanine. Provides the D-alanine required for cell wall biosynthesis. In Salmonella typhi, this protein is Alanine racemase, biosynthetic (alr).